Consider the following 312-residue polypeptide: Olfactory receptor 10K2 (312 aa).

The Extracellular segment spans residues 1–25 (MERVNETVVREVIFLGFSSLARLQQ). N-linked (GlcNAc...) asparagine glycosylation is present at N5. Residues 26 to 46 (LLFVIFLLLYLFTLGTNAIII) form a helical membrane-spanning segment. The Cytoplasmic segment spans residues 47 to 54 (STIVLDRA). Residues 55 to 75 (LHIPMYFFLAILSCSEICYTF) traverse the membrane as a helical segment. Residues 76 to 99 (IIVPKMLVDLLSQKKTISFLGCAI) are Extracellular-facing. A helical membrane pass occupies residues 100-120 (QMFSFLFLGCSHSFLLAVMGY). Residues 121–139 (DRYIAICNPLRYSVLMGHG) are Cytoplasmic-facing. Residues 140 to 160 (VCMGLVAAACACGFTVAQIIT) form a helical membrane-spanning segment. Residues 161-197 (SLVFHLPFYSSNQLHHFFCDIAPVLKLASHHNHFSQI) are Extracellular-facing. Residues 198–217 (VIFMLCTLVLAIPLLLILVS) traverse the membrane as a helical segment. The Cytoplasmic portion of the chain corresponds to 218–237 (YVHILSAILQFPSTLGRCKA). Residues 238-258 (FSTCVSHLIIVTVHYGCASFI) form a helical membrane-spanning segment. Residues 259–271 (YLRPQSNYSSSQD) lie on the Extracellular side of the membrane. A glycan (N-linked (GlcNAc...) asparagine) is linked at N265. The chain crosses the membrane as a helical span at residues 272–292 (ALISVSYTIITPLFNPMIYSL). Topologically, residues 293–312 (RNKEFKSALCKIVRRTISLL) are cytoplasmic.

Belongs to the G-protein coupled receptor 1 family.

It is found in the cell membrane. In terms of biological role, odorant receptor. In Homo sapiens (Human), this protein is Olfactory receptor 10K2 (OR10K2).